A 351-amino-acid chain; its full sequence is Serine/threonine-protein kinase mos (351 aa).

Residues 71-340 enclose the Protein kinase domain; it reads FSIDGVIGSG…ERRTDDTENL (270 aa). Residues 77–85 and K98 contribute to the ATP site; that span reads IGSGGFGSV. Residue D194 is the Proton acceptor of the active site.

It belongs to the protein kinase superfamily. Ser/Thr protein kinase family.

The enzyme catalyses L-seryl-[protein] + ATP = O-phospho-L-seryl-[protein] + ADP + H(+). It carries out the reaction L-threonyl-[protein] + ATP = O-phospho-L-threonyl-[protein] + ADP + H(+). Its function is as follows. Suppresses the mitotic cell cycle in oocytes, forcing them to undergo meiosis II to produce haploid gametes. Acts as a MAPK kinase kinase (MAP3K) that acts upstream of MAP kinase in oocytes. The protein is Serine/threonine-protein kinase mos of Patiria pectinifera (Starfish).